Reading from the N-terminus, the 320-residue chain is Cytochrome f (320 aa).

The first 35 residues, 1-35 (MQTRKTLSWIKEEITRSISVSLMIYIITGAYISNA), serve as a signal peptide directing secretion. Residues Y36, C56, C59, and H60 each contribute to the heme site. Residues 286-306 (VQGLLFFLASVILAQIFLVLK) traverse the membrane as a helical segment.

This sequence belongs to the cytochrome f family. As to quaternary structure, the 4 large subunits of the cytochrome b6-f complex are cytochrome b6, subunit IV (17 kDa polypeptide, petD), cytochrome f and the Rieske protein, while the 4 small subunits are PetG, PetL, PetM and PetN. The complex functions as a dimer. The cofactor is heme.

The protein localises to the plastid. Its subcellular location is the chloroplast thylakoid membrane. Functionally, component of the cytochrome b6-f complex, which mediates electron transfer between photosystem II (PSII) and photosystem I (PSI), cyclic electron flow around PSI, and state transitions. This Populus trichocarpa (Western balsam poplar) protein is Cytochrome f.